A 496-amino-acid polypeptide reads, in one-letter code: Glycerol kinase (496 aa).

ADP is bound at residue Thr11. ATP is bound by residues Thr11, Thr12, and Ser13. Thr11 is a sn-glycerol 3-phosphate binding site. Arg15 contributes to the ADP binding site. Sn-glycerol 3-phosphate is bound by residues Arg81, Glu82, Tyr133, and Asp242. The glycerol site is built by Arg81, Glu82, Tyr133, Asp242, and Gln243. Thr264 and Gly307 together coordinate ADP. Positions 264, 307, 311, and 408 each coordinate ATP. ADP contacts are provided by Gly408 and Asn412.

This sequence belongs to the FGGY kinase family.

It catalyses the reaction glycerol + ATP = sn-glycerol 3-phosphate + ADP + H(+). It participates in polyol metabolism; glycerol degradation via glycerol kinase pathway; sn-glycerol 3-phosphate from glycerol: step 1/1. With respect to regulation, inhibited by fructose 1,6-bisphosphate (FBP). In terms of biological role, key enzyme in the regulation of glycerol uptake and metabolism. Catalyzes the phosphorylation of glycerol to yield sn-glycerol 3-phosphate. The protein is Glycerol kinase of Trichlorobacter lovleyi (strain ATCC BAA-1151 / DSM 17278 / SZ) (Geobacter lovleyi).